A 211-amino-acid polypeptide reads, in one-letter code: Ribosomal RNA small subunit methyltransferase G (211 aa).

S-adenosyl-L-methionine-binding positions include Gly-78, Met-83, 129–130 (AE), and Arg-144.

It belongs to the methyltransferase superfamily. RNA methyltransferase RsmG family.

It localises to the cytoplasm. It catalyses the reaction guanosine(527) in 16S rRNA + S-adenosyl-L-methionine = N(7)-methylguanosine(527) in 16S rRNA + S-adenosyl-L-homocysteine. In terms of biological role, specifically methylates the N7 position of guanine in position 527 of 16S rRNA. The sequence is that of Ribosomal RNA small subunit methyltransferase G from Pseudomonas syringae pv. tomato (strain ATCC BAA-871 / DC3000).